Here is a 110-residue protein sequence, read N- to C-terminus: HTH-type transcriptional regulator TnrA (110 aa).

An HTH merR-type domain is found at 13-81; the sequence is VISIGIVSEL…TAEILKDMRK (69 aa). Residues 16-35 constitute a DNA-binding region (H-T-H motif); the sequence is IGIVSELTGLSVRQIRYYEE.

Homodimer. Under conditions of nitrogen excess, TnrA forms a stable complex with feedback-inhibited GlnA. Interacts with GlnK-AmtB complex.

The protein resides in the cell membrane. Its activity is regulated as follows. Under conditions of nitrogen excess, the DNA-binding activity is inhibited by the formation of a stable complex with feedback-inhibited GlnA. The presence of glutamine and AMP increases the inhibitory activity of glutamine synthetase by more than 1000-fold. In terms of biological role, transcription regulator that actives the transcription of genes required for nitrogen assimilation such as nrgAB (ammonium transport), nasABCDEF (nitrate/nitrite assimilation), ureABC (urea degradation) and gabP (GABA transport), during nitrogen limitation. Also represses glnRA and gltAB in the absence of ammonium. On the contrary of the MerR members, which require longer DNA sites for high-affinity binding, TnrA requires a DNA sequence of 17 nucleotides as minimal binding site. In Bacillus subtilis (strain 168), this protein is HTH-type transcriptional regulator TnrA.